Consider the following 442-residue polypeptide: MKKVFIRTFGCQMNEYDSDKMLAVLAEEHGGIEQVTQADEADIILFNTCSVREKAQEKVFSDLGRVRPLKEKKPGLIIGVAGCVASQEGENIIKRAPYVDVVFGPQTLHRLPKMIVDKETSGLSQVDISFPEIEKFDHLPPARVEGGAAFVSIMEGCSKYCSFCVVPYTRGEEFSRPLNDVLTEIANLAQQGVKEINLLGQNVNAYRGEMDDGEICDFATLLRIVHEIPGIERMRFTTSHPREFTDSIIECYRDLPKLVSHLHLPIQSGSDRVLSAMKRGYTALEYKSIIRKLRAIRPDLCLSSDFIVGFPGETEREFEQTLKLVKDIAFDLSFVFIYSPRPGTPAANLHDDTPHEEKVRRLEALNEVIEAETARINQTMIGTVQRCLVEGISKKDPDQLQARTANNRVVNFTGTPDMINQMIDLEITEAYTFSLRGKIVEA.

The MTTase N-terminal domain occupies 2–120 (KKVFIRTFGC…LPKMIVDKET (119 aa)). C11, C49, C83, C157, C161, and C164 together coordinate [4Fe-4S] cluster. Positions 143–375 (RVEGGAAFVS…NEVIEAETAR (233 aa)) constitute a Radical SAM core domain. The TRAM domain occupies 378 to 441 (QTMIGTVQRC…TFSLRGKIVE (64 aa)).

Belongs to the methylthiotransferase family. MiaB subfamily. In terms of assembly, monomer. [4Fe-4S] cluster serves as cofactor.

Its subcellular location is the cytoplasm. It carries out the reaction N(6)-dimethylallyladenosine(37) in tRNA + (sulfur carrier)-SH + AH2 + 2 S-adenosyl-L-methionine = 2-methylsulfanyl-N(6)-dimethylallyladenosine(37) in tRNA + (sulfur carrier)-H + 5'-deoxyadenosine + L-methionine + A + S-adenosyl-L-homocysteine + 2 H(+). Functionally, catalyzes the methylthiolation of N6-(dimethylallyl)adenosine (i(6)A), leading to the formation of 2-methylthio-N6-(dimethylallyl)adenosine (ms(2)i(6)A) at position 37 in tRNAs that read codons beginning with uridine. The chain is tRNA-2-methylthio-N(6)-dimethylallyladenosine synthase from Neisseria meningitidis serogroup A / serotype 4A (strain DSM 15465 / Z2491).